The following is a 109-amino-acid chain: Small ribosomal subunit protein uS17 (109 aa).

Belongs to the universal ribosomal protein uS17 family. In terms of assembly, part of the 30S ribosomal subunit.

Its function is as follows. One of the primary rRNA binding proteins, it binds specifically to the 5'-end of 16S ribosomal RNA. This is Small ribosomal subunit protein uS17 from Thermoplasma acidophilum (strain ATCC 25905 / DSM 1728 / JCM 9062 / NBRC 15155 / AMRC-C165).